Reading from the N-terminus, the 66-residue chain is Disintegrin EO5B (66 aa).

Residues asparagine 1–lysine 65 enclose the Disintegrin domain. 4 cysteine pairs are disulfide-bonded: cysteine 6–cysteine 29, cysteine 20–cysteine 26, cysteine 25–cysteine 50, and cysteine 38–cysteine 57. A Cell attachment site; atypical (VGD) motif is present at residues valine 42–aspartate 44.

This sequence belongs to the disintegrin family. Dimeric disintegrin subfamily. As to quaternary structure, heterodimer with EO4A or EO5A; disulfide-linked. In terms of tissue distribution, expressed by the venom gland.

It localises to the secreted. Functionally, poor inhibitor of platelet aggregation. When it dimerizes with EO4A, it inhibits the adhesion of cells expressing the RGD-dependent integrin alpha-5/beta-1 (ITGA5/ITGB1) to immobilized fibronectin. When it dimerizes with EO5A, it inhibits the adhesion of the alpha-4/beta-1 (ITGA4/ITGB1) integrin to VCAM-1. When it dimerizes either with EO4A or EO5A, the inhibition on alpha-IIb/beta-3 (ITGA2B/ITGB3) is low. This Echis ocellatus (Ocellated saw-scaled viper) protein is Disintegrin EO5B.